The primary structure comprises 339 residues: Ketol-acid reductoisomerase (NADP(+)) (339 aa).

In terms of domain architecture, KARI N-terminal Rossmann spans 1–182; that stretch reads MRVYYDRDAD…GGGRAGIIET (182 aa). Residues 24–27, arginine 48, serine 51, serine 53, and 83–86 each bind NADP(+); these read YGSQ and DELQ. The active site involves histidine 108. An NADP(+)-binding site is contributed by glycine 134. In terms of domain architecture, KARI C-terminal knotted spans 183-328; sequence TFREECETDL…AKLRDMMPWI (146 aa). The Mg(2+) site is built by aspartate 191, glutamate 195, glutamate 227, and glutamate 231. Substrate is bound at residue serine 252.

This sequence belongs to the ketol-acid reductoisomerase family. Requires Mg(2+) as cofactor.

It catalyses the reaction (2R)-2,3-dihydroxy-3-methylbutanoate + NADP(+) = (2S)-2-acetolactate + NADPH + H(+). It carries out the reaction (2R,3R)-2,3-dihydroxy-3-methylpentanoate + NADP(+) = (S)-2-ethyl-2-hydroxy-3-oxobutanoate + NADPH + H(+). Its pathway is amino-acid biosynthesis; L-isoleucine biosynthesis; L-isoleucine from 2-oxobutanoate: step 2/4. It participates in amino-acid biosynthesis; L-valine biosynthesis; L-valine from pyruvate: step 2/4. Involved in the biosynthesis of branched-chain amino acids (BCAA). Catalyzes an alkyl-migration followed by a ketol-acid reduction of (S)-2-acetolactate (S2AL) to yield (R)-2,3-dihydroxy-isovalerate. In the isomerase reaction, S2AL is rearranged via a Mg-dependent methyl migration to produce 3-hydroxy-3-methyl-2-ketobutyrate (HMKB). In the reductase reaction, this 2-ketoacid undergoes a metal-dependent reduction by NADPH to yield (R)-2,3-dihydroxy-isovalerate. The protein is Ketol-acid reductoisomerase (NADP(+)) of Nitrobacter hamburgensis (strain DSM 10229 / NCIMB 13809 / X14).